The primary structure comprises 77 residues: MQLRKALLVIFVAYLLVTDEAEAFWGFLGKLAMKAVPSLIGGNKSSSKRKREIEDLFDPYQKDLDLQRLDRFFSQFQ.

The signal sequence occupies residues 1–23; the sequence is MQLRKALLVIFVAYLLVTDEAEA. Residues 49–77 constitute a propeptide that is removed on maturation; that stretch reads RKREIEDLFDPYQKDLDLQRLDRFFSQFQ.

It belongs to the non-disulfide-bridged peptide (NDBP) superfamily. Medium-length antimicrobial peptide (group 3) family. Expressed by the venom gland.

It is found in the secreted. The protein resides in the target cell membrane. Its function is as follows. Antimicrobial peptide with potent activity against Gram-positive bacteria S.aureus (MIC=10 uM) and S.agalactiaea (MIC=15 uM), and Gram-negative bacteria E.coli (MIC=24 uM) and P.aeruginosa (MIC=15 uM), as well as against yeasts Candida albicans (MIC=3.1 uM) and C.glabrata (MIC=25 uM). Also elicits low hemolysis on human erythrocytes (HC(50)=167 uM). In Mesomexovis punctatus (Scorpion), this protein is VpAmp2.0.